The following is a 301-amino-acid chain: Nucleosome assembly protein 1;3 (301 aa).

The stretch at 15–69 (VETLKNKLQALAEQHVDVLESLAPVVRKRVDVLIEIQSQHDELEAKFLEEKSALE) forms a coiled coil. The short motif at 36–51 (LAPVVRKRVDVLIEIQ) is the Nuclear export signal element. Residues 279–301 (EDYGASWVDDEEDDDDEYSDEEA) are disordered. Ser297 is modified (phosphoserine; by CK2).

The protein belongs to the nucleosome assembly protein (NAP) family.

It is found in the nucleus. It localises to the cytoplasm. Its function is as follows. May modulate chromatin structure by regulation of nucleosome assembly/disassembly. This is Nucleosome assembly protein 1;3 (NAP1;3) from Oryza sativa subsp. indica (Rice).